The following is a 232-amino-acid chain: Ferric nitrobindin-like protein (232 aa).

The span at 1-10 shows a compositional bias: polar residues; the sequence is MSENETSKTG. The tract at residues 1 to 33 is disordered; sequence MSENETSKTGGNAGVPGSGADAPSLSDSPAISG. The short motif at 85–91 is the GXWXGXG element; the sequence is GVWRGEG.

The protein belongs to the nitrobindin family.

The protein is Ferric nitrobindin-like protein of Corynebacterium efficiens (strain DSM 44549 / YS-314 / AJ 12310 / JCM 11189 / NBRC 100395).